Here is a 295-residue protein sequence, read N- to C-terminus: Alpha-soluble NSF attachment protein (295 aa).

Methionine 1 carries the N-acetylmethionine modification. 3 positions are modified to phosphoserine: serine 26, serine 29, and serine 195.

It belongs to the SNAP family. Interacts with PRKCABP, and disrupts the interaction between GRIA2 and PRKCABP, leading to the internalization of GRIA2. Found in a complex with VAMP8. Component of a SNARE-like complex that contains at least ZW10, USE1L, RINT1, STX18 and NAPA/SNAP-alpha. Interacts with VTI1A. Interacts with STX12. Interacts with GNA12 (via N-terminus); the interaction promotes CDH5 localization to plasma membrane.

It is found in the cell membrane. Required for vesicular transport between the endoplasmic reticulum and the Golgi apparatus. Together with GNA12 promotes CDH5 localization to plasma membrane. This is Alpha-soluble NSF attachment protein (NAPA) from Homo sapiens (Human).